We begin with the raw amino-acid sequence, 450 residues long: Ig mu chain C region (450 aa).

The sequence is that of Ig mu chain C region from Canis lupus familiaris (Dog).